Here is a 252-residue protein sequence, read N- to C-terminus: Pre-rRNA-processing protein pno1 (252 aa).

A disordered region spans residues 1-57 (MPAPTALLRKSDEPLSAEEPSLTFSSDAQASGQGEAPSPIPTESAQHSDMRIDEESR). Over residues 22 to 32 (LTFSSDAQASG) the composition is skewed to polar residues. Residues 46-57 (QHSDMRIDEESR) show a composition bias toward basic and acidic residues. The 53-residue stretch at 173-225 (GEHLSRAIGRIAGKDGKTKFAIENASRTRVVLQGTKVTILGRFRDLGIAQEAI) folds into the KH domain.

It belongs to the PNO1 family. In terms of assembly, component of the small ribosomal subunit, ribosomal RNA processing complex (SSU RRP complex).

Its subcellular location is the cytoplasm. The protein localises to the nucleus. The protein resides in the nucleolus. In terms of biological role, required for small ribosomal subunit (SSU) synthesis. Has a role in the processing of early nucleolar and late cytoplasmic pre-RNA species. This is Pre-rRNA-processing protein pno1 (pno1) from Aspergillus fumigatus (strain ATCC MYA-4609 / CBS 101355 / FGSC A1100 / Af293) (Neosartorya fumigata).